The following is a 529-amino-acid chain: Ribonuclease Y (529 aa).

A helical membrane pass occupies residues 4 to 24 (GLIYISLEVLVACLITALIMY). Positions 216–297 (LTSRIALPCS…NRIEEVYHRV (82 aa)) constitute a KH domain. Residues 342 to 435 (ALQHSKEVAL…VCAADALSAG (94 aa)) enclose the HD domain.

It belongs to the RNase Y family.

The protein resides in the cell membrane. Its function is as follows. Endoribonuclease that initiates mRNA decay. The sequence is that of Ribonuclease Y from Helicobacter pylori (strain J99 / ATCC 700824) (Campylobacter pylori J99).